The following is a 365-amino-acid chain: Eukaryotic translation initiation factor 3 subunit H (365 aa).

The MPN domain occupies 11–160 (VQVEALVVMK…LRAFRLSPQF (150 aa)). The stretch at 273-303 (YQRSLAREQTKIAAWQAKRKAENATRAQLKQ) forms a coiled coil.

This sequence belongs to the eIF-3 subunit H family. In terms of assembly, component of the eukaryotic translation initiation factor 3 (eIF-3) complex.

The protein resides in the cytoplasm. Component of the eukaryotic translation initiation factor 3 (eIF-3) complex, which is involved in protein synthesis of a specialized repertoire of mRNAs and, together with other initiation factors, stimulates binding of mRNA and methionyl-tRNAi to the 40S ribosome. The eIF-3 complex specifically targets and initiates translation of a subset of mRNAs involved in cell proliferation. The protein is Eukaryotic translation initiation factor 3 subunit H of Coccidioides immitis (strain RS) (Valley fever fungus).